Here is a 140-residue protein sequence, read N- to C-terminus: MAGWQSYVDNLMCDGCCQEAAIVGYCDAKYVWAATAGGVFQSITPIEIDMIVGKDREGFFTNGLTLGAKKCSVIRDSLYVDGDCTMDIRTKSQGGEPTYNVAVGRAGRVLVFVMGKEGVHGGGLNKKAYSMAKYLRDSGF.

An N-acetylalanine modification is found at A2.

The protein belongs to the profilin family. As to quaternary structure, occurs in many kinds of cells as a complex with monomeric actin in a 1:1 ratio. Interacts with PFN2. In terms of assembly, interacts with ACTMAP (via N-terminus); the interaction may facilitate efficient cleavage of the acetylated N-terminus of immature actin by ACTMAP. As to expression, highly expressed in brain, skeletal muscle and kidney and less strongly in heart, placenta, lung and liver.

Its subcellular location is the cytoplasm. It is found in the cytoskeleton. In terms of biological role, binds to actin and affects the structure of the cytoskeleton. At high concentrations, profilin prevents the polymerization of actin, whereas it enhances it at low concentrations. By binding to PIP2, it inhibits the formation of IP3 and DG. This is Profilin-2 (PFN2) from Homo sapiens (Human).